Here is a 374-residue protein sequence, read N- to C-terminus: MKLDELAAIRRDLHQIPELGFQEYKTQAYLLNHLAKHPEGRIEIEKWRTGLFVKVKGTAPEKILAYRADMDGLSIREDTGYSFSSVHQDRMHACGHDFHMTIALGIIDHFVRHPVKQDLLFLFQPAEEGPGGAEPMLESDLFKKWEPSMITALHIAPELPVGTIGTKSGLLFANTSELVIELEGKGGHAAYPHLAEDMVVAASSLVTQMQSIVARNVDPLDSAVITIGTITGGSAQNIIAQEARLEGTIRTLSPASMEQVKKRIEAMVRGLETAYQCSGKVSYPAAYYQVCNSSDLVEDFMQFVSENGLAEVVRSKEAMTGEDFGYMLKKYPGFMFWLGVDSPYGLHHAKLQPKEEALETAVRVMTAYFSSKAN.

Aspartate 69 is an active-site residue. Catalysis depends on glutamate 128, which acts as the Proton acceptor.

Belongs to the peptidase M20A family. N-acetyldiaminopimelate deacetylase subfamily.

It catalyses the reaction N-acetyl-(2S,6S)-2,6-diaminopimelate + H2O = (2S,6S)-2,6-diaminopimelate + acetate. It participates in amino-acid biosynthesis; L-lysine biosynthesis via DAP pathway; LL-2,6-diaminopimelate from (S)-tetrahydrodipicolinate (acetylase route): step 3/3. Functionally, catalyzes the conversion of N-acetyl-diaminopimelate to diaminopimelate and acetate. The sequence is that of N-acetyldiaminopimelate deacetylase from Bacillus licheniformis (strain ATCC 14580 / DSM 13 / JCM 2505 / CCUG 7422 / NBRC 12200 / NCIMB 9375 / NCTC 10341 / NRRL NRS-1264 / Gibson 46).